We begin with the raw amino-acid sequence, 448 residues long: O-Mevalon transferase yanI (448 aa).

Asn-2 is a glycosylation site (N-linked (GlcNAc...) asparagine). A run of 8 helical transmembrane segments spans residues 21 to 41, 54 to 74, 79 to 96, 165 to 185, 217 to 237, 316 to 336, 350 to 370, and 390 to 410; these read VLLSHSLASTHYTVLAFLLAV, YGLLLLQITCALQAFVAPPPP, AVLYTSGVLMANLLARYF, FVTAQLLTIIAMYAGLYLVEV, LIVLGLALVVYSHFALFVLPL, MLMLITFVISGLIHTSGSYHV, VKYFISQAISIMIEDFGCWLL, and IVTAGWYFWSRVHWSVMPVAL.

This sequence belongs to the wax synthase family.

The protein localises to the membrane. It functions in the pathway secondary metabolite biosynthesis; terpenoid biosynthesis. Functionally, O-Mevalon transferase yanI; part of the gene cluster that mediates the biosynthesis of yanuthone D, a fungal isoprenoid epoxycyclohexenone that acts as an antibiotic against fungi and bacteria. The first step of the pathway is the synthesis of 6-methylsalicylic acid (6-MSA) by the polyketide synthase yanA. 6-MSA is then converted to m-cresol by the decarboxylase yanB. The cytochrome P450 monooxygenase yanC then catalyzes the oxidation of m-cresol to toluquinol. Epoxidation of toluquinol is then performed by the short chain dehydrogenase yanD, with the help of yanE, and a further prenylation by yanG leads to 7-deacetoxyyanuthone A. The next step is the hydroxylation of C-22 of 7-deacetoxyyanuthone A by the cytochrome P450 monooxygenase yanH to yield 22-deacetylyanuthone A. O-Mevalon transferase yanI then attaches mevalon to the hydroxyl group of 22-deacetylyanuthone A to produce yanuthone E. Finally, the FAD-dependent monooxygenase yanF oxidizes the hydroxyl group at C15 of yanuthone E to form yanuthone D. Furthermore, several branching points in the pathway lead to the production of yanuthones F and G from 7-deacetoxyyanuthone A; yanuthones H and I from 22-deacetylyanuthone A; and yanuthone J from yanuthone E. The chain is O-Mevalon transferase yanI from Aspergillus niger (strain ATCC 1015 / CBS 113.46 / FGSC A1144 / LSHB Ac4 / NCTC 3858a / NRRL 328 / USDA 3528.7).